The chain runs to 42 residues: Large ribosomal subunit protein P2 (42 aa).

This sequence belongs to the eukaryotic ribosomal protein P1/P2 family. As to quaternary structure, P1 and P2 exist as dimers at the large ribosomal subunit. Phosphorylated.

In terms of biological role, plays an important role in the elongation step of protein synthesis. This is Large ribosomal subunit protein P2 from Triticum aestivum (Wheat).